We begin with the raw amino-acid sequence, 171 residues long: Co-chaperone protein HscB (171 aa).

The 73-residue stretch at 2–74 (DYFTLFGLPA…LTRAEYLLSL (73 aa)) folds into the J domain.

It belongs to the HscB family. Interacts with HscA and stimulates its ATPase activity. Interacts with IscU.

Its function is as follows. Co-chaperone involved in the maturation of iron-sulfur cluster-containing proteins. Seems to help targeting proteins to be folded toward HscA. In Salmonella heidelberg (strain SL476), this protein is Co-chaperone protein HscB.